A 291-amino-acid chain; its full sequence is Homoserine kinase (291 aa).

80–90 lines the ATP pocket; that stretch reads PLARGLGSSST.

Belongs to the GHMP kinase family. Homoserine kinase subfamily.

The protein localises to the cytoplasm. It carries out the reaction L-homoserine + ATP = O-phospho-L-homoserine + ADP + H(+). It functions in the pathway amino-acid biosynthesis; L-threonine biosynthesis; L-threonine from L-aspartate: step 4/5. In terms of biological role, catalyzes the ATP-dependent phosphorylation of L-homoserine to L-homoserine phosphate. This Lactiplantibacillus plantarum (strain ATCC BAA-793 / NCIMB 8826 / WCFS1) (Lactobacillus plantarum) protein is Homoserine kinase.